The sequence spans 346 residues: MLEIVAAIFIVLLGSGICSCAEAALFSVPLVKVRQLSQSNNPSAIALQAIRHRMNRPIGTIVVLNNIFNIVGSITIGALATKHLQDAWMGVFSGILTLLIIVFGEIIPKTLGERYATNIALLIAIPVRFLTLIFTPLVWLIEQITNPFTHGKRVPSTNEAEIKFLATLGYKEGVIEGDEEQMIQRVFQLNDLMAVDLMTPRVIITYLLGELTLAECQQDIIQSQHTRILIVDEYIDEVLGIALKQDLLTALIQGEGYKTIAELARPAQFVPEGMRADKLLKQFQEKREHLMVVIDEYGGVAGVITLEDVVEVLTGEIVDETDKNIDLQEIARKKRQALLKQRGVAP.

4 helical membrane-spanning segments follow: residues 1 to 21 (MLEIVAAIFIVLLGSGICSCA), 58 to 78 (IGTIVVLNNIFNIVGSITIGA), 87 to 107 (AWMGVFSGILTLLIIVFGEII), and 121 to 141 (LLIAIPVRFLTLIFTPLVWLI). Positions 1 to 179 (MLEIVAAIFI…YKEGVIEGDE (179 aa)) constitute a CNNM transmembrane domain. CBS domains lie at 198-259 (MTPR…GYKT) and 263-320 (LARP…IVDE).

Belongs to the UPF0053 family.

It localises to the cell membrane. The protein is UPF0053 protein sll1254 of Synechocystis sp. (strain ATCC 27184 / PCC 6803 / Kazusa).